Reading from the N-terminus, the 392-residue chain is Phosphoglycerate kinase (392 aa).

Substrate is bound by residues 21–23, arginine 36, 59–62, arginine 113, and arginine 146; these read DLN and HLGR. ATP contacts are provided by residues lysine 197, glutamate 319, and 345-348; that span reads GGDT.

Belongs to the phosphoglycerate kinase family. Monomer.

The protein localises to the cytoplasm. It catalyses the reaction (2R)-3-phosphoglycerate + ATP = (2R)-3-phospho-glyceroyl phosphate + ADP. Its pathway is carbohydrate degradation; glycolysis; pyruvate from D-glyceraldehyde 3-phosphate: step 2/5. The sequence is that of Phosphoglycerate kinase from Alkalilimnicola ehrlichii (strain ATCC BAA-1101 / DSM 17681 / MLHE-1).